We begin with the raw amino-acid sequence, 148 residues long: uncharacterized protein (148 aa).

2 disordered regions span residues 1 to 86 (MCPP…VQSP) and 122 to 148 (RAHRLPQPKPPCQSRQRPSPDSQTSPC). Over residues 38-57 (RPPKMQRRPRPPVAKRRRFP) the composition is skewed to basic residues. Over residues 134-148 (QSRQRPSPDSQTSPC) the composition is skewed to polar residues.

Belongs to the Epstein-Barr virus BLLF2 family.

This is an uncharacterized protein from Homo sapiens (Human).